Here is a 339-residue protein sequence, read N- to C-terminus: Polyhydroxybutyrate depolymerase (339 aa).

The signal sequence occupies residues 1-20; the sequence is MFDSVKIAWLVALGAAQVAA. Residue Ser-39 is part of the active site. The cysteines at positions 70 and 79 are disulfide-linked. Residue Asp-121 is part of the active site. Residue Asn-144 is glycosylated (N-linked (GlcNAc...) asparagine). Residue His-155 is part of the active site. 3 disulfides stabilise this stretch: Cys-169-Cys-180, Cys-234-Cys-241, and Cys-250-Cys-304. Trp-307 lines the (3R)-hydroxybutanoate trimer pocket.

It belongs to the carbohydrate esterase 1 (CE1) family.

The protein resides in the secreted. The catalysed reaction is [(3R)-hydroxybutanoate](n) + H2O = [(3R)-hydroxybutanoate](n-1) + (R)-3-hydroxybutanoate + H(+). The enzyme is completely inhibited by dithiothreitol (DTT) and diisopropylfluorophosphate (DFP), and partially inhibited by HgCl(2) and by enzyme3-(p-nitrophenoxy)propane (EPNP). Activity is not affected by N-ethylmaleimide (NEM) or phenylmethylsulfonyl fluoride (PMSF). Its function is as follows. Esterase involved in the hydrolysis of polyhydroxybutyrate, a microbial polyester that can be produced from renewable resources. In Talaromyces funiculosus (Fruitlet core rot fungus), this protein is Polyhydroxybutyrate depolymerase.